The primary structure comprises 265 residues: 4-hydroxy-tetrahydrodipicolinate reductase (265 aa).

9 to 14 contributes to the NAD(+) binding site; the sequence is GARGKM. Lys37 serves as a coordination point for NADP(+). NAD(+) is bound by residues 99-101 and 125-128; these read GTT and APNF. His155 acts as the Proton donor/acceptor in catalysis. (S)-2,3,4,5-tetrahydrodipicolinate is bound at residue His156. Lys159 (proton donor) is an active-site residue. Residue 165 to 166 participates in (S)-2,3,4,5-tetrahydrodipicolinate binding; it reads GT.

Belongs to the DapB family.

It localises to the cytoplasm. The enzyme catalyses (S)-2,3,4,5-tetrahydrodipicolinate + NAD(+) + H2O = (2S,4S)-4-hydroxy-2,3,4,5-tetrahydrodipicolinate + NADH + H(+). It catalyses the reaction (S)-2,3,4,5-tetrahydrodipicolinate + NADP(+) + H2O = (2S,4S)-4-hydroxy-2,3,4,5-tetrahydrodipicolinate + NADPH + H(+). It participates in amino-acid biosynthesis; L-lysine biosynthesis via DAP pathway; (S)-tetrahydrodipicolinate from L-aspartate: step 4/4. Functionally, catalyzes the conversion of 4-hydroxy-tetrahydrodipicolinate (HTPA) to tetrahydrodipicolinate. This chain is 4-hydroxy-tetrahydrodipicolinate reductase, found in Lysinibacillus sphaericus (strain C3-41).